The following is a 268-amino-acid chain: MADS-box protein FBP24 (268 aa).

In terms of domain architecture, MADS-box spans 4 to 64 (MGRGKIEVKR…GKLFEYCSQP (61 aa)). The K-box domain maps to 88 to 178 (RVQLYDEVAK…YQWLMNNQMY (91 aa)). The tract at residues 243-268 (NSISPYRLQPSHPNLQDSHVHGPSYD) is disordered.

The protein resides in the nucleus. Functionally, probable transcription factor. This is MADS-box protein FBP24 (FBP24) from Petunia hybrida (Petunia).